We begin with the raw amino-acid sequence, 287 residues long: Steroidogenic acute regulatory protein, mitochondrial (287 aa).

The N-terminal 61 residues, 1 to 61 (MLPATFKLCA…RRSSLLSSRI (61 aa)), are a transit peptide targeting the mitochondrion. Residues 66–279 (GYNEAEVSYV…LRQRMADNSV (214 aa)) form the START domain.

As to quaternary structure, may interact with TSPO.

It is found in the mitochondrion. It carries out the reaction cholesterol(in) = cholesterol(out). It functions in the pathway steroid metabolism; cholesterol metabolism. Functionally, plays a key role in steroid hormone synthesis by enhancing the metabolism of cholesterol into pregnenolone. Mediates the transfer of cholesterol from the outer mitochondrial membrane to the inner mitochondrial membrane where it is cleaved to pregnenolone. The chain is Steroidogenic acute regulatory protein, mitochondrial (star) from Oncorhynchus mykiss (Rainbow trout).